We begin with the raw amino-acid sequence, 284 residues long: Deoxyribonuclease-1 (284 aa).

An N-terminal signal peptide occupies residues 1–22 (MRGARLMGALLALAGLLQGALA). N-linked (GlcNAc...) asparagine glycosylation is present at N40. The active site involves E100. The cysteines at positions 123 and 126 are disulfide-linked. N128 is a glycosylation site (N-linked (GlcNAc...) asparagine). H156 is an active-site residue. Cysteines 195 and 231 form a disulfide.

The protein belongs to the DNase I family. Ca(2+) is required as a cofactor. Requires Mg(2+) as cofactor. Highest expression in pancreas.

The protein resides in the secreted. It is found in the zymogen granule. The protein localises to the nucleus envelope. It carries out the reaction Endonucleolytic cleavage to 5'-phosphodinucleotide and 5'-phosphooligonucleotide end-products.. Functionally, serum endocuclease secreted into body fluids by a wide variety of exocrine and endocrine organs. Expressed by non-hematopoietic tissues and preferentially cleaves protein-free DNA. Among other functions, seems to be involved in cell death by apoptosis. Binds specifically to G-actin and blocks actin polymerization. Together with DNASE1L3, plays a key role in degrading neutrophil extracellular traps (NETs). NETs are mainly composed of DNA fibers and are released by neutrophils to bind pathogens during inflammation. Degradation of intravascular NETs by DNASE1 and DNASE1L3 is required to prevent formation of clots that obstruct blood vessels and cause organ damage following inflammation. The chain is Deoxyribonuclease-1 (DNASE1) from Canis lupus familiaris (Dog).